Consider the following 345-residue polypeptide: Small ribosomal subunit biogenesis GTPase RsgA (345 aa).

Positions 1–36 (MSKNKLSKGQERRVQANHQRRLQQRERGAAHWDDQP) are disordered. Basic and acidic residues predominate over residues 23 to 34 (QQRERGAAHWDD). Residues 103–273 (RSVLTRPDVY…LIDSPGVREL (171 aa)) enclose the CP-type G domain. Residues 159-162 (NKID) and 213-221 (GQSGVGKSS) contribute to the GTP site. Zn(2+)-binding residues include Cys297, Cys302, His304, and Cys310.

The protein belongs to the TRAFAC class YlqF/YawG GTPase family. RsgA subfamily. As to quaternary structure, monomer. Associates with 30S ribosomal subunit, binds 16S rRNA. Zn(2+) serves as cofactor.

It is found in the cytoplasm. Its function is as follows. One of several proteins that assist in the late maturation steps of the functional core of the 30S ribosomal subunit. Helps release RbfA from mature subunits. May play a role in the assembly of ribosomal proteins into the subunit. Circularly permuted GTPase that catalyzes slow GTP hydrolysis, GTPase activity is stimulated by the 30S ribosomal subunit. The protein is Small ribosomal subunit biogenesis GTPase RsgA of Sodalis glossinidius (strain morsitans).